We begin with the raw amino-acid sequence, 671 residues long: DNA ligase (671 aa).

Residues 32–36 (DAEYD), 81–82 (SL), and Glu-113 contribute to the NAD(+) site. Lys-115 acts as the N6-AMP-lysine intermediate in catalysis. Residues Arg-136, Glu-173, Lys-290, and Lys-314 each contribute to the NAD(+) site. Zn(2+) contacts are provided by Cys-408, Cys-411, Cys-426, and Cys-432. A BRCT domain is found at 593–671 (EIDSPFAGKT…EAEMIRLLGA (79 aa)).

Belongs to the NAD-dependent DNA ligase family. LigA subfamily. Requires Mg(2+) as cofactor. Mn(2+) serves as cofactor.

The catalysed reaction is NAD(+) + (deoxyribonucleotide)n-3'-hydroxyl + 5'-phospho-(deoxyribonucleotide)m = (deoxyribonucleotide)n+m + AMP + beta-nicotinamide D-nucleotide.. DNA ligase that catalyzes the formation of phosphodiester linkages between 5'-phosphoryl and 3'-hydroxyl groups in double-stranded DNA using NAD as a coenzyme and as the energy source for the reaction. It is essential for DNA replication and repair of damaged DNA. This is DNA ligase from Salmonella paratyphi B (strain ATCC BAA-1250 / SPB7).